A 605-amino-acid chain; its full sequence is UvrABC system protein C (605 aa).

Residues S13 to V92 form the GIY-YIG domain. The 36-residue stretch at E205–M240 folds into the UVR domain.

This sequence belongs to the UvrC family. Interacts with UvrB in an incision complex.

The protein resides in the cytoplasm. The UvrABC repair system catalyzes the recognition and processing of DNA lesions. UvrC both incises the 5' and 3' sides of the lesion. The N-terminal half is responsible for the 3' incision and the C-terminal half is responsible for the 5' incision. The polypeptide is UvrABC system protein C (Clostridioides difficile (strain 630) (Peptoclostridium difficile)).